Consider the following 275-residue polypeptide: Phosphate import ATP-binding protein PstB 3 (275 aa).

A disordered region spans residues 1 to 26 (MATQETDDSLISTDVQTDATERGDQP). The segment covering 9–18 (SLISTDVQTD) has biased composition (polar residues). The region spanning 31–270 (VETKHLDVHY…PEDDRVEDYI (240 aa)) is the ABC transporter domain. 63–70 (GPSGCGKS) lines the ATP pocket.

The protein belongs to the ABC transporter superfamily. Phosphate importer (TC 3.A.1.7) family. The complex is composed of two ATP-binding proteins (PstB), two transmembrane proteins (PstC and PstA) and a solute-binding protein (PstS).

It localises to the cell membrane. It carries out the reaction phosphate(out) + ATP + H2O = ADP + 2 phosphate(in) + H(+). Functionally, part of the ABC transporter complex PstSACB involved in phosphate import. Responsible for energy coupling to the transport system. The chain is Phosphate import ATP-binding protein PstB 3 from Natronomonas pharaonis (strain ATCC 35678 / DSM 2160 / CIP 103997 / JCM 8858 / NBRC 14720 / NCIMB 2260 / Gabara) (Halobacterium pharaonis).